The following is a 156-amino-acid chain: Small ribosomal subunit protein uS7 (156 aa).

Belongs to the universal ribosomal protein uS7 family. As to quaternary structure, part of the 30S ribosomal subunit. Contacts proteins S9 and S11.

Functionally, one of the primary rRNA binding proteins, it binds directly to 16S rRNA where it nucleates assembly of the head domain of the 30S subunit. Is located at the subunit interface close to the decoding center, probably blocks exit of the E-site tRNA. The chain is Small ribosomal subunit protein uS7 from Synechococcus sp. (strain CC9605).